Consider the following 330-residue polypeptide: Biotin synthase (330 aa).

One can recognise a Radical SAM core domain in the interval 53–276 (NNIRLNVLLS…VFPFKELRLS (224 aa)). 3 residues coordinate [4Fe-4S] cluster: cysteine 68, cysteine 72, and cysteine 75. [2Fe-2S] cluster is bound by residues cysteine 112, cysteine 144, cysteine 204, and arginine 274.

Belongs to the radical SAM superfamily. Biotin synthase family. In terms of assembly, homodimer. [4Fe-4S] cluster serves as cofactor. It depends on [2Fe-2S] cluster as a cofactor.

The enzyme catalyses (4R,5S)-dethiobiotin + (sulfur carrier)-SH + 2 reduced [2Fe-2S]-[ferredoxin] + 2 S-adenosyl-L-methionine = (sulfur carrier)-H + biotin + 2 5'-deoxyadenosine + 2 L-methionine + 2 oxidized [2Fe-2S]-[ferredoxin]. It participates in cofactor biosynthesis; biotin biosynthesis; biotin from 7,8-diaminononanoate: step 2/2. In terms of biological role, catalyzes the conversion of dethiobiotin (DTB) to biotin by the insertion of a sulfur atom into dethiobiotin via a radical-based mechanism. In Streptococcus agalactiae serotype III (strain NEM316), this protein is Biotin synthase.